The chain runs to 315 residues: Methionyl-tRNA formyltransferase (315 aa).

111–114 (SLLP) is a (6S)-5,6,7,8-tetrahydrofolate binding site.

This sequence belongs to the Fmt family.

The enzyme catalyses L-methionyl-tRNA(fMet) + (6R)-10-formyltetrahydrofolate = N-formyl-L-methionyl-tRNA(fMet) + (6S)-5,6,7,8-tetrahydrofolate + H(+). Attaches a formyl group to the free amino group of methionyl-tRNA(fMet). The formyl group appears to play a dual role in the initiator identity of N-formylmethionyl-tRNA by promoting its recognition by IF2 and preventing the misappropriation of this tRNA by the elongation apparatus. The protein is Methionyl-tRNA formyltransferase of Flavobacterium johnsoniae (strain ATCC 17061 / DSM 2064 / JCM 8514 / BCRC 14874 / CCUG 350202 / NBRC 14942 / NCIMB 11054 / UW101) (Cytophaga johnsonae).